The following is a 230-amino-acid chain: Phosphoribosylformylglycinamidine synthase subunit PurQ (230 aa).

The Glutamine amidotransferase type-1 domain maps to Arg2–Val226. Cys86 serves as the catalytic Nucleophile. Residues His195 and Glu197 contribute to the active site.

Part of the FGAM synthase complex composed of 1 PurL, 1 PurQ and 2 PurS subunits.

The protein localises to the cytoplasm. It carries out the reaction N(2)-formyl-N(1)-(5-phospho-beta-D-ribosyl)glycinamide + L-glutamine + ATP + H2O = 2-formamido-N(1)-(5-O-phospho-beta-D-ribosyl)acetamidine + L-glutamate + ADP + phosphate + H(+). The enzyme catalyses L-glutamine + H2O = L-glutamate + NH4(+). It participates in purine metabolism; IMP biosynthesis via de novo pathway; 5-amino-1-(5-phospho-D-ribosyl)imidazole from N(2)-formyl-N(1)-(5-phospho-D-ribosyl)glycinamide: step 1/2. Its function is as follows. Part of the phosphoribosylformylglycinamidine synthase complex involved in the purines biosynthetic pathway. Catalyzes the ATP-dependent conversion of formylglycinamide ribonucleotide (FGAR) and glutamine to yield formylglycinamidine ribonucleotide (FGAM) and glutamate. The FGAM synthase complex is composed of three subunits. PurQ produces an ammonia molecule by converting glutamine to glutamate. PurL transfers the ammonia molecule to FGAR to form FGAM in an ATP-dependent manner. PurS interacts with PurQ and PurL and is thought to assist in the transfer of the ammonia molecule from PurQ to PurL. In Brevibacillus brevis (strain 47 / JCM 6285 / NBRC 100599), this protein is Phosphoribosylformylglycinamidine synthase subunit PurQ.